We begin with the raw amino-acid sequence, 179 residues long: Large ribosomal subunit protein uL6 (179 aa).

It belongs to the universal ribosomal protein uL6 family. Part of the 50S ribosomal subunit.

Its function is as follows. This protein binds to the 23S rRNA, and is important in its secondary structure. It is located near the subunit interface in the base of the L7/L12 stalk, and near the tRNA binding site of the peptidyltransferase center. The sequence is that of Large ribosomal subunit protein uL6 from Finegoldia magna (strain ATCC 29328 / DSM 20472 / WAL 2508) (Peptostreptococcus magnus).